Consider the following 480-residue polypeptide: O-acyltransferase ausP (480 aa).

Residues His180 and Asp412 each act as proton acceptor in the active site.

It belongs to the plant acyltransferase family. As to quaternary structure, monomer.

It participates in secondary metabolite biosynthesis; terpenoid biosynthesis. In terms of biological role, O-acyltransferase; part of the gene cluster that mediates the biosynthesis of calidodehydroaustin, a fungal meroterpenoid. The first step of the pathway is the synthesis of 3,5-dimethylorsellinic acid by the polyketide synthase ausA. 3,5-dimethylorsellinic acid is then prenylated by the polyprenyl transferase ausN. Further epoxidation by the FAD-dependent monooxygenase ausM and cyclization by the probable terpene cyclase ausL lead to the formation of protoaustinoid A. Protoaustinoid A is then oxidized to spiro-lactone preaustinoid A3 by the combined action of the FAD-binding monooxygenases ausB and ausC, and the dioxygenase ausE. Acid-catalyzed keto-rearrangement and ring contraction of the tetraketide portion of preaustinoid A3 by ausJ lead to the formation of preaustinoid A4. The aldo-keto reductase ausK, with the help of ausH, is involved in the next step by transforming preaustinoid A4 into isoaustinone which is in turn hydroxylated by the P450 monooxygenase ausI to form austinolide. The cytochrome P450 monooxygenase ausG modifies austinolide to austinol. Austinol is further acetylated to austin by the O-acetyltransferase ausP, which spontaneously changes to dehydroaustin. The cytochrome P450 monooxygenase ausR then converts dehydroaustin is into 7-dehydrodehydroaustin. The hydroxylation catalyzed by ausR permits the O-acetyltransferase ausQ to add an additional acetyl group to the molecule, leading to the formation of acetoxydehydroaustin. The short chain dehydrogenase ausT catalyzes the reduction of the double bond present between carbon atoms 1 and 2 to convert 7-dehydrodehydroaustin into 1,2-dihydro-7-hydroxydehydroaustin. AusQ catalyzes not only an acetylation reaction but also the addition of the PKS ausV diketide product to 1,2-dihydro-7-hydroxydehydroaustin, forming precalidodehydroaustin. Finally, the iron/alpha-ketoglutarate-dependent dioxygenase converts precalidodehydroaustin into calidodehydroaustin. The polypeptide is O-acyltransferase ausP (Aspergillus calidoustus).